We begin with the raw amino-acid sequence, 394 residues long: Probable fimbrial assembly protein FimD, serogroup H1 (394 aa).

In Dichelobacter nodosus (Bacteroides nodosus), this protein is Probable fimbrial assembly protein FimD, serogroup H1 (fimD).